Here is a 171-residue protein sequence, read N- to C-terminus: 3-hydroxydecanoyl-[acyl-carrier-protein] dehydratase (171 aa).

The active site involves His70.

The protein belongs to the thioester dehydratase family. FabA subfamily. Homodimer.

It is found in the cytoplasm. It carries out the reaction a (3R)-hydroxyacyl-[ACP] = a (2E)-enoyl-[ACP] + H2O. The enzyme catalyses (3R)-hydroxydecanoyl-[ACP] = (2E)-decenoyl-[ACP] + H2O. The catalysed reaction is (2E)-decenoyl-[ACP] = (3Z)-decenoyl-[ACP]. It functions in the pathway lipid metabolism; fatty acid biosynthesis. Necessary for the introduction of cis unsaturation into fatty acids. Catalyzes the dehydration of (3R)-3-hydroxydecanoyl-ACP to E-(2)-decenoyl-ACP and then its isomerization to Z-(3)-decenoyl-ACP. Can catalyze the dehydratase reaction for beta-hydroxyacyl-ACPs with saturated chain lengths up to 16:0, being most active on intermediate chain length. The chain is 3-hydroxydecanoyl-[acyl-carrier-protein] dehydratase from Vibrio campbellii (strain ATCC BAA-1116).